The sequence spans 368 residues: F-box/kelch-repeat protein At5g51250 (368 aa).

The F-box domain occupies 1–44 (MSSLPDDLLLSIFARISRLYYPTLSLVSKSFRSLLASPDLYKAR). 3 Kelch repeats span residues 116 to 163 (DIYN…VLDR), 165 to 218 (IYVA…CIDG), and 260 to 304 (LFYI…YGGK).

This is F-box/kelch-repeat protein At5g51250 from Arabidopsis thaliana (Mouse-ear cress).